The following is a 252-amino-acid chain: PF03932 family protein CutC (252 aa).

Belongs to the CutC family.

It is found in the cytoplasm. The chain is PF03932 family protein CutC from Pectobacterium atrosepticum (strain SCRI 1043 / ATCC BAA-672) (Erwinia carotovora subsp. atroseptica).